Here is a 278-residue protein sequence, read N- to C-terminus: Urease accessory protein UreD (278 aa).

This sequence belongs to the UreD family. In terms of assembly, ureD, UreF and UreG form a complex that acts as a GTP-hydrolysis-dependent molecular chaperone, activating the urease apoprotein by helping to assemble the nickel containing metallocenter of UreC. The UreE protein probably delivers the nickel.

It is found in the cytoplasm. Functionally, required for maturation of urease via the functional incorporation of the urease nickel metallocenter. The polypeptide is Urease accessory protein UreD (Staphylococcus aureus (strain bovine RF122 / ET3-1)).